We begin with the raw amino-acid sequence, 371 residues long: tRNA-specific 2-thiouridylase MnmA (371 aa).

Residues 13 to 20 (GMSGGVDS) and Met39 contribute to the ATP site. The segment at 99–101 (NPD) is interaction with target base in tRNA. Catalysis depends on Cys104, which acts as the Nucleophile. Cys104 and Cys200 are oxidised to a cystine. Gly128 serves as a coordination point for ATP. Residues 150–152 (KDQ) form an interaction with tRNA region. The active-site Cysteine persulfide intermediate is Cys200. The interval 308 to 309 (RY) is interaction with tRNA.

This sequence belongs to the MnmA/TRMU family.

It is found in the cytoplasm. The catalysed reaction is S-sulfanyl-L-cysteinyl-[protein] + uridine(34) in tRNA + AH2 + ATP = 2-thiouridine(34) in tRNA + L-cysteinyl-[protein] + A + AMP + diphosphate + H(+). Its function is as follows. Catalyzes the 2-thiolation of uridine at the wobble position (U34) of tRNA, leading to the formation of s(2)U34. This chain is tRNA-specific 2-thiouridylase MnmA, found in Geobacillus thermodenitrificans (strain NG80-2).